Here is a 455-residue protein sequence, read N- to C-terminus: Argininosuccinate lyase (455 aa).

This sequence belongs to the lyase 1 family. Argininosuccinate lyase subfamily.

The protein localises to the cytoplasm. The catalysed reaction is 2-(N(omega)-L-arginino)succinate = fumarate + L-arginine. It functions in the pathway amino-acid biosynthesis; L-arginine biosynthesis; L-arginine from L-ornithine and carbamoyl phosphate: step 3/3. This is Argininosuccinate lyase from Shewanella baltica (strain OS185).